The sequence spans 145 residues: Aspartate 1-decarboxylase (145 aa).

S25 acts as the Schiff-base intermediate with substrate; via pyruvic acid in catalysis. Residue S25 is modified to Pyruvic acid (Ser). Position 57 (T57) interacts with substrate. Y58 acts as the Proton donor in catalysis. 73-75 (GAA) is a substrate binding site.

It belongs to the PanD family. Heterooctamer of four alpha and four beta subunits. Requires pyruvate as cofactor. In terms of processing, is synthesized initially as an inactive proenzyme, which is activated by self-cleavage at a specific serine bond to produce a beta-subunit with a hydroxyl group at its C-terminus and an alpha-subunit with a pyruvoyl group at its N-terminus.

It localises to the cytoplasm. It carries out the reaction L-aspartate + H(+) = beta-alanine + CO2. It functions in the pathway cofactor biosynthesis; (R)-pantothenate biosynthesis; beta-alanine from L-aspartate: step 1/1. Catalyzes the pyruvoyl-dependent decarboxylation of aspartate to produce beta-alanine. This is Aspartate 1-decarboxylase from Micrococcus luteus (strain ATCC 4698 / DSM 20030 / JCM 1464 / CCM 169 / CCUG 5858 / IAM 1056 / NBRC 3333 / NCIMB 9278 / NCTC 2665 / VKM Ac-2230) (Micrococcus lysodeikticus).